A 603-amino-acid polypeptide reads, in one-letter code: Probable NOT transcription complex subunit VIP2 (603 aa).

2 stretches are compositionally biased toward polar residues: residues 1-28 (MQGTLTSRNTAINNVPSSGVQQSGNNLS) and 36-70 (NLPSALSQIPQGNSHGHSGMTSRGGTSVVGNPGYS). 4 disordered regions span residues 1–70 (MQGT…PGYS), 212–242 (NDGSPFDINDFPQLSSRPSSAGGPQGQLGSL), 306–335 (AGFNLGGTYSSNRPQQQLQHAPSVSSGGVS), and 355–377 (SSHSSYQQQGGGPPGIGLRPLNS). Residues 312–335 (GTYSSNRPQQQLQHAPSVSSGGVS) show a composition bias toward polar residues.

Belongs to the CNOT2/3/5 family. As to quaternary structure, binds to VIP1. Interacts with Agrobacterium tumefaciens VirE2. Forms a complex made of Agrobacterium VirE2, VIP1, VIP2 and single-stranded DNA (ssDNA).

The protein resides in the nucleus. Its function is as follows. Transcriptional regulator required for Agrobacterium-mediated stable genetic transformation by T-DNA integration in host genome, but not for T-DNA transient expression. This Nicotiana benthamiana protein is Probable NOT transcription complex subunit VIP2 (VIP2).